The primary structure comprises 362 residues: Chorismate synthase (362 aa).

Arg-47 provides a ligand contact to NADP(+). Residues 124–126 (RSS), Gly-286, 301–305 (KPTAT), and Arg-327 contribute to the FMN site.

This sequence belongs to the chorismate synthase family. In terms of assembly, homotetramer. It depends on FMNH2 as a cofactor.

The enzyme catalyses 5-O-(1-carboxyvinyl)-3-phosphoshikimate = chorismate + phosphate. It functions in the pathway metabolic intermediate biosynthesis; chorismate biosynthesis; chorismate from D-erythrose 4-phosphate and phosphoenolpyruvate: step 7/7. Catalyzes the anti-1,4-elimination of the C-3 phosphate and the C-6 proR hydrogen from 5-enolpyruvylshikimate-3-phosphate (EPSP) to yield chorismate, which is the branch point compound that serves as the starting substrate for the three terminal pathways of aromatic amino acid biosynthesis. This reaction introduces a second double bond into the aromatic ring system. This is Chorismate synthase from Synechococcus sp. (strain ATCC 27144 / PCC 6301 / SAUG 1402/1) (Anacystis nidulans).